The sequence spans 146 residues: Large ribosomal subunit protein uL15 (146 aa).

Basic and acidic residues predominate over residues 1-13 (MKLHELKPAEGSR). The tract at residues 1–57 (MKLHELKPAEGSRKVRNRVGRGTSSGNGKTSGRGQKGQKARSGVGLRPGFEGGQTPL) is disordered. Residues 23 to 35 (TSSGNGKTSGRGQ) show a composition bias toward gly residues.

Belongs to the universal ribosomal protein uL15 family. In terms of assembly, part of the 50S ribosomal subunit.

In terms of biological role, binds to the 23S rRNA. This chain is Large ribosomal subunit protein uL15, found in Streptococcus thermophilus (strain ATCC BAA-491 / LMD-9).